Here is a 138-residue protein sequence, read N- to C-terminus: Small ribosomal subunit protein uS11 (138 aa).

The segment covering 1 to 12 (MPPKKAAASSAK) has biased composition (low complexity). The interval 1–28 (MPPKKAAASSAKKGQKTRRREKKNVPHG) is disordered. A compositionally biased stretch (basic residues) spans 13–22 (KGQKTRRREK).

This sequence belongs to the universal ribosomal protein uS11 family. Part of the 30S ribosomal subunit. Interacts with proteins S7 and S18. Binds to IF-3.

In terms of biological role, located on the platform of the 30S subunit, it bridges several disparate RNA helices of the 16S rRNA. Forms part of the Shine-Dalgarno cleft in the 70S ribosome. The chain is Small ribosomal subunit protein uS11 from Mycobacterium sp. (strain JLS).